The chain runs to 391 residues: Phosphoglycerate kinase (391 aa).

Substrate contacts are provided by residues 21-23, Arg-36, 59-62, Arg-113, and Arg-146; these read DLN and HLGR. ATP contacts are provided by residues Lys-197, Glu-319, and 345–348; that span reads GGDT.

This sequence belongs to the phosphoglycerate kinase family. Monomer.

It localises to the cytoplasm. It carries out the reaction (2R)-3-phosphoglycerate + ATP = (2R)-3-phospho-glyceroyl phosphate + ADP. It functions in the pathway carbohydrate degradation; glycolysis; pyruvate from D-glyceraldehyde 3-phosphate: step 2/5. This is Phosphoglycerate kinase from Xanthomonas axonopodis pv. citri (strain 306).